We begin with the raw amino-acid sequence, 171 residues long: Peptide deformylase 1 (171 aa).

Residues cysteine 99 and histidine 141 each contribute to the Fe cation site. Glutamate 142 is a catalytic residue.

It belongs to the polypeptide deformylase family. The cofactor is Fe(2+).

It carries out the reaction N-terminal N-formyl-L-methionyl-[peptide] + H2O = N-terminal L-methionyl-[peptide] + formate. Its function is as follows. Removes the formyl group from the N-terminal Met of newly synthesized proteins. Requires at least a dipeptide for an efficient rate of reaction. N-terminal L-methionine is a prerequisite for activity but the enzyme has broad specificity at other positions. This is Peptide deformylase 1 from Xanthomonas axonopodis pv. citri (strain 306).